Consider the following 254-residue polypeptide: Probable glucose-1-phosphate cytidylyltransferase (254 aa).

Substrate contacts are provided by residues 6–10 (LCGGK), 11–13 (GTR), K23, T103, R108, and G126. Mg(2+)-binding residues include D127 and D232.

Belongs to the glucose-1-phosphate cytidylyltransferase family. Mg(2+) is required as a cofactor.

It catalyses the reaction alpha-D-glucose 1-phosphate + CTP + H(+) = CDP-D-glucose + diphosphate. In terms of biological role, catalyzes the transfer of a CMP moiety from CTP to glucose 1-phosphate. In Bacillus subtilis (strain 168), this protein is Probable glucose-1-phosphate cytidylyltransferase (yfnH).